We begin with the raw amino-acid sequence, 344 residues long: Anthranilate phosphoribosyltransferase (344 aa).

Residues Gly84, 87–88 (GD), Thr92, 94–97 (NIST), 112–120 (KHGNRSVSS), and Ser124 contribute to the 5-phospho-alpha-D-ribose 1-diphosphate site. Gly84 contacts anthranilate. A Mg(2+)-binding site is contributed by Ser96. An anthranilate-binding site is contributed by Asn115. Arg170 is a binding site for anthranilate. 2 residues coordinate Mg(2+): Asp229 and Glu230.

Belongs to the anthranilate phosphoribosyltransferase family. As to quaternary structure, homodimer. The cofactor is Mg(2+).

It carries out the reaction N-(5-phospho-beta-D-ribosyl)anthranilate + diphosphate = 5-phospho-alpha-D-ribose 1-diphosphate + anthranilate. It participates in amino-acid biosynthesis; L-tryptophan biosynthesis; L-tryptophan from chorismate: step 2/5. In terms of biological role, catalyzes the transfer of the phosphoribosyl group of 5-phosphorylribose-1-pyrophosphate (PRPP) to anthranilate to yield N-(5'-phosphoribosyl)-anthranilate (PRA). This chain is Anthranilate phosphoribosyltransferase, found in Xylella fastidiosa (strain M23).